Here is a 431-residue protein sequence, read N- to C-terminus: uncharacterized protein (431 aa).

11 helical membrane passes run Val-33 to Leu-53, Phe-63 to Leu-83, Val-111 to Ser-131, Val-143 to Leu-163, Leu-197 to Thr-217, Ala-241 to Leu-261, Gly-273 to Met-293, Leu-318 to Met-338, Ala-358 to Leu-378, Ser-383 to Leu-403, and Thr-407 to Ala-427.

The protein to M.tuberculosis Rv1510 and Rv3630.

The protein resides in the cell membrane. This is an uncharacterized protein from Mycobacterium bovis (strain ATCC BAA-935 / AF2122/97).